The sequence spans 152 residues: Protein SprT-like (152 aa).

In terms of domain architecture, SprT-like spans 7–148 (QRLVEEVSLQ…GKCKGKLNLI (142 aa)). His67 contacts Zn(2+). Glu68 is an active-site residue. His71 provides a ligand contact to Zn(2+).

It belongs to the SprT family. It depends on Zn(2+) as a cofactor.

The protein localises to the cytoplasm. This is Protein SprT-like from Bacillus anthracis (strain A0248).